Reading from the N-terminus, the 109-residue chain is Nucleoid-associated protein LGAS_0369 (109 aa).

The protein belongs to the YbaB/EbfC family. In terms of assembly, homodimer.

Its subcellular location is the cytoplasm. It is found in the nucleoid. Functionally, binds to DNA and alters its conformation. May be involved in regulation of gene expression, nucleoid organization and DNA protection. The sequence is that of Nucleoid-associated protein LGAS_0369 from Lactobacillus gasseri (strain ATCC 33323 / DSM 20243 / BCRC 14619 / CIP 102991 / JCM 1131 / KCTC 3163 / NCIMB 11718 / NCTC 13722 / AM63).